The chain runs to 365 residues: Fatty acid hydroxylase vlmA (365 aa).

Residues 20–41 (TTIKRRQNDKTKTPKTKPVSKI) are disordered. The N-linked (GlcNAc...) asparagine glycan is linked to Asn-47. 4 helical membrane passes run 62–82 (ILLQ…VLSI), 89–109 (VHPF…FRFL), 144–164 (LNWS…LVAY), and 179–199 (WWAW…FYYY). The Fatty acid hydroxylase domain maps to 189 to 335 (LYPIILDFYY…TRIWDRLFGT (147 aa)).

This sequence belongs to the sterol desaturase family. TMEM195 subfamily.

The protein resides in the membrane. It functions in the pathway secondary metabolite biosynthesis. Its function is as follows. Fatty acid hydroxylase; part of the gene cluster that mediates the biosynthesis of verlamelin, a lipopeptide that exhibits antifungal activity against plant pathogenic fungi. Verlamelin is a cyclic hexadepsipeptide and is bridged by ester bonding between a 5-hydroxytetradecanoic acid moiety and a carboxyl group on the terminal Val of amide-bonded tetradecanoyl-hexapeptide D-allo-Thr-D-Ala-L-Pro-L-Gln-D-Tyr-L-Val. VlmA and vlmB are altogether regarded as essential components in the biosynthesis of 5-hydroxytetradecanoic acid. VlmA catalyzes the hydroxylation at position C5 of tetradecanoic acid produced in primary metabolism, while the precise function of vlmB still remains to be solved. To be loaded onto the waiting NRPS, 5-hydroxytetradecanoic acid is activated in the form of acyladenylate by the AMP-dependent ligase vlmC. VlmS seems to accept the fatty-acyl intermediate onto the initial module to further elongate amino acid residues by the downstream modules. In addition, in the last module at its C-terminus, vlmS contains a surplus condensation (C) domain that may be involved in cyclization, the last step to form verlamelin. The chain is Fatty acid hydroxylase vlmA from Lecanicillium sp.